The following is a 526-amino-acid chain: 1,4-beta-D-glucan cellobiohydrolase B (526 aa).

The signal sequence occupies residues 1–23 (MASSFQLYKALLFFSSLLSAVQA). The segment at 24–458 (QKVGTQQAEV…SNIKFGPIGS (435 aa)) is catalytic. The Nucleophile role is filled by E235. The active-site Proton donor is the E240. N-linked (GlcNAc...) asparagine glycans are attached at residues N293 and N400. Residues 459–490 (TFGNGGGSGPTTTVTTSTATSTTSSATSTATG) form a ser/Thr-rich linker region. The tract at residues 464–488 (GGSGPTTTVTTSTATSTTSSATSTA) is disordered. Over residues 468–488 (PTTTVTTSTATSTTSSATSTA) the composition is skewed to low complexity. The CBM1 domain maps to 490–526 (GQAQHWEQCGGNGWTGPTVCASPWACTVVNSWYSQCL). 2 disulfide bridges follow: C498-C515 and C509-C525.

This sequence belongs to the glycosyl hydrolase 7 (cellulase C) family.

Its subcellular location is the secreted. The catalysed reaction is Hydrolysis of (1-&gt;4)-beta-D-glucosidic linkages in cellulose and cellotetraose, releasing cellobiose from the non-reducing ends of the chains.. Functionally, the biological conversion of cellulose to glucose generally requires three types of hydrolytic enzymes: (1) Endoglucanases which cut internal beta-1,4-glucosidic bonds; (2) Exocellobiohydrolases that cut the disaccharide cellobiose from the non-reducing end of the cellulose polymer chain; (3) Beta-1,4-glucosidases which hydrolyze the cellobiose and other short cello-oligosaccharides to glucose. The sequence is that of 1,4-beta-D-glucan cellobiohydrolase B (cbhB) from Emericella nidulans (strain FGSC A4 / ATCC 38163 / CBS 112.46 / NRRL 194 / M139) (Aspergillus nidulans).